The primary structure comprises 71 residues: Large ribosomal subunit protein bL31 (71 aa).

Residues Cys16, Cys18, Cys38, and Cys41 each coordinate Zn(2+).

The protein belongs to the bacterial ribosomal protein bL31 family. Type A subfamily. In terms of assembly, part of the 50S ribosomal subunit. Zn(2+) serves as cofactor.

Functionally, binds the 23S rRNA. This is Large ribosomal subunit protein bL31 from Neisseria gonorrhoeae (strain ATCC 700825 / FA 1090).